Consider the following 330-residue polypeptide: Cytosolic iron-sulfur protein assembly protein 1 (330 aa).

7 WD repeats span residues 12–53, 56–95, 105–144, 151–190, 195–236, 248–286, and 292–330; these read LYKE…DVLD, AHKKAIRSVAWRPHTSLLAAGSFDSTVSIWAKEESADRTF, GHENEVKGVAWSNDGYYLATCSRDKSVWIWETDESGEEYE, EHSQDVKHVIWHPSEALLASSSYDDTVRIWKDYDDDWECV, GHEG…EDDQ, VHKRQVYNVAWGFNGLIASVGADGVLAVYEEVDGEWKVF, and CHGVYEINVVKWLELNGKTILATGGDDGIVNFWSLEKAA.

It belongs to the WD repeat CIA1 family. As to quaternary structure, interacts with NAR1.

The protein resides in the cytoplasm. It is found in the nucleus. Essential component of the cytosolic iron-sulfur (Fe/S) protein assembly machinery. Required for the maturation of extramitochondrial Fe/S proteins. This chain is Cytosolic iron-sulfur protein assembly protein 1, found in Saccharomyces cerevisiae (strain ATCC 204508 / S288c) (Baker's yeast).